The sequence spans 496 residues: MFS transporter cpaT (496 aa).

The segment at 1–45 (MGHQEEPPRICKTPSGHEQGEGPAEKTSKPSTEEVGWDGPTDPAR) is disordered. Residues 18–32 (EQGEGPAEKTSKPST) show a composition bias toward basic and acidic residues. Asn-48 is a glycosylation site (N-linked (GlcNAc...) asparagine). A helical transmembrane segment spans residues 58–78 (MGIISYLTFLTPLTSSIVAPA). Residue Asn-90 is glycosylated (N-linked (GlcNAc...) asparagine). 5 helical membrane passes run 93–113 (LASFVVSIYLVGFAVGPLFLA), 130–150 (FIFTIWNIAGAVAPNVGALLV), 154–174 (FAGISGSGPVTLGAGSVADMF), 180–200 (GVAMSLYGLGPLLGPVIGPIA), and 212–232 (WVFWLLAIVSGVAVILVLFVL). Asn-252 carries N-linked (GlcNAc...) asparagine glycosylation. A run of 6 helical transmembrane segments spans residues 288 to 308 (VALFSLYTGVVFGYLYLLFTT), 325 to 345 (GLVYIGIGVGALIGISCFGAL), 367 to 387 (LPPLIPGSFLIPIGLFWYGWS), 395 to 415 (IMPIIGLGWVGCGMIATLLPI), 427 to 449 (AASAIAANTVVRSIVGAFLPLAG), and 463 to 483 (SLLGFVALGLLPVPVVFYFYG).

Belongs to the major facilitator superfamily.

It is found in the membrane. In terms of biological role, MFS transporter; part of the gene cluster that mediates the biosynthesis of the fungal neurotoxin cyclopiazonic acid (CPA), a nanomolar inhibitor of Ca(2+)-ATPase with a unique pentacyclic indole tetramic acid scaffold. The sequence is that of MFS transporter cpaT from Aspergillus oryzae (Yellow koji mold).